We begin with the raw amino-acid sequence, 422 residues long: UDP-N-acetylglucosamine 1-carboxyvinyltransferase (422 aa).

Lys-22–Asn-23 serves as a coordination point for phosphoenolpyruvate. Arg-93 is a binding site for UDP-N-acetyl-alpha-D-glucosamine. Catalysis depends on Cys-117, which acts as the Proton donor. Residue Cys-117 is modified to 2-(S-cysteinyl)pyruvic acid O-phosphothioketal. Residues Arg-122–Leu-126, Lys-162–Val-165, Asp-307, and Ile-329 contribute to the UDP-N-acetyl-alpha-D-glucosamine site.

Belongs to the EPSP synthase family. MurA subfamily.

Its subcellular location is the cytoplasm. It carries out the reaction phosphoenolpyruvate + UDP-N-acetyl-alpha-D-glucosamine = UDP-N-acetyl-3-O-(1-carboxyvinyl)-alpha-D-glucosamine + phosphate. Its pathway is cell wall biogenesis; peptidoglycan biosynthesis. In terms of biological role, cell wall formation. Adds enolpyruvyl to UDP-N-acetylglucosamine. This chain is UDP-N-acetylglucosamine 1-carboxyvinyltransferase, found in Hamiltonella defensa subsp. Acyrthosiphon pisum (strain 5AT).